A 359-amino-acid polypeptide reads, in one-letter code: NADH-quinone oxidoreductase subunit H (359 aa).

8 consecutive transmembrane segments (helical) span residues 16-36, 94-114, 128-148, 167-187, 205-225, 261-281, 296-316, and 331-351; these read IWPA…AVLA, GLFI…WAVI, GLLF…IAGW, VSYE…SGSL, GLTF…VYFI, FFLA…LLFL, IPGW…FLWV, and LGWK…GAWM.

This sequence belongs to the complex I subunit 1 family. As to quaternary structure, NDH-1 is composed of 14 different subunits. Subunits NuoA, H, J, K, L, M, N constitute the membrane sector of the complex.

It is found in the cell inner membrane. It carries out the reaction a quinone + NADH + 5 H(+)(in) = a quinol + NAD(+) + 4 H(+)(out). Its function is as follows. NDH-1 shuttles electrons from NADH, via FMN and iron-sulfur (Fe-S) centers, to quinones in the respiratory chain. The immediate electron acceptor for the enzyme in this species is believed to be ubiquinone. Couples the redox reaction to proton translocation (for every two electrons transferred, four hydrogen ions are translocated across the cytoplasmic membrane), and thus conserves the redox energy in a proton gradient. This subunit may bind ubiquinone. This Polaromonas naphthalenivorans (strain CJ2) protein is NADH-quinone oxidoreductase subunit H.